The primary structure comprises 249 residues: Probable transcriptional regulatory protein GOX1679 (249 aa).

Belongs to the TACO1 family.

Its subcellular location is the cytoplasm. This chain is Probable transcriptional regulatory protein GOX1679, found in Gluconobacter oxydans (strain 621H) (Gluconobacter suboxydans).